Here is a 254-residue protein sequence, read N- to C-terminus: Adenosine 5'-phosphosulfate reductase (254 aa).

[4Fe-4S] cluster contacts are provided by cysteine 131, cysteine 132, cysteine 212, and cysteine 215. Cysteine 238 acts as the Nucleophile; cysteine thiosulfonate intermediate in catalysis.

It belongs to the PAPS reductase family. CysH subfamily. The cofactor is [4Fe-4S] cluster.

Its subcellular location is the cytoplasm. The catalysed reaction is [thioredoxin]-disulfide + sulfite + AMP + 2 H(+) = adenosine 5'-phosphosulfate + [thioredoxin]-dithiol. It participates in sulfur metabolism; hydrogen sulfide biosynthesis; sulfite from sulfate. Catalyzes the formation of sulfite from adenosine 5'-phosphosulfate (APS) using thioredoxin as an electron donor. The chain is Adenosine 5'-phosphosulfate reductase from Mesorhizobium japonicum (strain LMG 29417 / CECT 9101 / MAFF 303099) (Mesorhizobium loti (strain MAFF 303099)).